Here is a 225-residue protein sequence, read N- to C-terminus: Probable iron export ATP-binding protein FetA (225 aa).

An ABC transporter domain is found at 8-225 (LQLQNVGYLA…EMQEARYELA (218 aa)). Position 40–47 (40–47 (GPSGCGKS)) interacts with ATP.

The protein belongs to the ABC transporter superfamily. In terms of assembly, the complex is composed of two ATP-binding proteins (FetA) and two transmembrane proteins (FetB).

The protein resides in the cell inner membrane. Its function is as follows. Part of the ABC transporter complex FetAB, which is probably involved in iron export and enhances resistance to H(2)O(2)-mediated oxidative stress. Probably responsible for energy coupling to the transport system. The sequence is that of Probable iron export ATP-binding protein FetA (fetA) from Escherichia coli (strain K12).